We begin with the raw amino-acid sequence, 143 residues long: MRTTYMAKPNEVERKWYVIDAAGKPLGRVASEAAKLLRGKHKPEFTPHVDTGDFVIIINAEKAVLTGKKLEKKMFYRHSRYPGGLKAIPYGILMKTNPVLAFEKAVKGMLPHNRLGRKLFKKLKVYAGESHPHQAQKPEIWQF.

The protein belongs to the universal ribosomal protein uL13 family. As to quaternary structure, part of the 50S ribosomal subunit.

In terms of biological role, this protein is one of the early assembly proteins of the 50S ribosomal subunit, although it is not seen to bind rRNA by itself. It is important during the early stages of 50S assembly. This is Large ribosomal subunit protein uL13 from Carboxydothermus hydrogenoformans (strain ATCC BAA-161 / DSM 6008 / Z-2901).